Reading from the N-terminus, the 88-residue chain is Small ribosomal subunit protein bS16 (88 aa).

This sequence belongs to the bacterial ribosomal protein bS16 family.

This chain is Small ribosomal subunit protein bS16, found in Geobacter metallireducens (strain ATCC 53774 / DSM 7210 / GS-15).